The primary structure comprises 383 residues: MSDVVNLLDFDAQGLLAYCESLGEKSFRAKQLQRWIHQSGASEFGEMTDLAKSLREKLATRANIQAPAVISDHLSSDGTRKWLVDVGQGNAVETVYIPEETRGTLCVSSQAGCAVNCRFCSTGKQGFSRNLSTGEIIGQLWMAEFAMRKQLGRGPKDDRVITNVVMMGMGEPLLNYDAVVPALALMLDDNAYGLSRRRVTVSTSGVVPMMDRLARDVPVALAVSLHASNDALRDVLVPLNKKYPLAELMAACRRYLEFAPRDFITFEYCMLDGVNDTVEHARELLRVVADVPCKFNLIPFNPFPESGLKRSNNEQIRRFSQVLLDAGIVTTIRKTRGDDIDAACGQLAGEVKDRTRLAERGKFGKIVEIPVVGADSTHRMGTA.

E93 acts as the Proton acceptor in catalysis. In terms of domain architecture, Radical SAM core spans 99–339; it reads EETRGTLCVS…TTIRKTRGDD (241 aa). A disulfide bond links C106 and C344. [4Fe-4S] cluster is bound by residues C113, C117, and C120. S-adenosyl-L-methionine is bound by residues 170–171, S202, 224–226, and N301; these read GE and SLH. C344 acts as the S-methylcysteine intermediate in catalysis.

It belongs to the radical SAM superfamily. RlmN family. Requires [4Fe-4S] cluster as cofactor.

It localises to the cytoplasm. The catalysed reaction is adenosine(2503) in 23S rRNA + 2 reduced [2Fe-2S]-[ferredoxin] + 2 S-adenosyl-L-methionine = 2-methyladenosine(2503) in 23S rRNA + 5'-deoxyadenosine + L-methionine + 2 oxidized [2Fe-2S]-[ferredoxin] + S-adenosyl-L-homocysteine. It catalyses the reaction adenosine(37) in tRNA + 2 reduced [2Fe-2S]-[ferredoxin] + 2 S-adenosyl-L-methionine = 2-methyladenosine(37) in tRNA + 5'-deoxyadenosine + L-methionine + 2 oxidized [2Fe-2S]-[ferredoxin] + S-adenosyl-L-homocysteine. In terms of biological role, specifically methylates position 2 of adenine 2503 in 23S rRNA and position 2 of adenine 37 in tRNAs. m2A2503 modification seems to play a crucial role in the proofreading step occurring at the peptidyl transferase center and thus would serve to optimize ribosomal fidelity. The protein is Dual-specificity RNA methyltransferase RlmN of Ralstonia pickettii (strain 12J).